The sequence spans 131 residues: Small ribosomal subunit protein uS8 (131 aa).

This sequence belongs to the universal ribosomal protein uS8 family. In terms of assembly, part of the 30S ribosomal subunit. Contacts proteins S5 and S12.

One of the primary rRNA binding proteins, it binds directly to 16S rRNA central domain where it helps coordinate assembly of the platform of the 30S subunit. This Rhizorhabdus wittichii (strain DSM 6014 / CCUG 31198 / JCM 15750 / NBRC 105917 / EY 4224 / RW1) (Sphingomonas wittichii) protein is Small ribosomal subunit protein uS8.